We begin with the raw amino-acid sequence, 305 residues long: uncharacterized protein (305 aa).

The segment at 255-305 (RCHRAGLRSPPRTREPLWSLGPSGGEAAGEAPGGKGPPTPVLPHARRAGAA) is disordered. Gly residues predominate over residues 276–288 (PSGGEAAGEAPGG).

This is an uncharacterized protein from Streptomyces fradiae (Streptomyces roseoflavus).